The following is a 295-amino-acid chain: Acetylglutamate kinase (295 aa).

Residues 66–67 (GG), arginine 88, and asparagine 193 contribute to the substrate site.

The protein belongs to the acetylglutamate kinase family. ArgB subfamily.

The protein resides in the cytoplasm. The catalysed reaction is N-acetyl-L-glutamate + ATP = N-acetyl-L-glutamyl 5-phosphate + ADP. It participates in amino-acid biosynthesis; L-arginine biosynthesis; N(2)-acetyl-L-ornithine from L-glutamate: step 2/4. Catalyzes the ATP-dependent phosphorylation of N-acetyl-L-glutamate. This chain is Acetylglutamate kinase, found in Rhizobium leguminosarum bv. trifolii (strain WSM2304).